The following is a 278-amino-acid chain: Fasciclin-like arabinogalactan protein 5 (278 aa).

Residues 1–24 (MGLKASLSLLSLTILLVFSKVVTA) form the signal peptide. Residues 25–169 (NNITLAFQKY…LSIIQITMPI (145 aa)) enclose the FAS1 domain. N-linked (GlcNAc...) asparagine glycosylation is found at Asn-26, Asn-74, Asn-126, and Asn-159. The segment at 199 to 257 (VVPAPGPAADDNSPDSAVPKTPPAPATDTPEADSPAPAPSADNEKIEAADKAKPSSSAS) is disordered. A compositionally biased stretch (low complexity) spans 224–239 (ATDTPEADSPAPAPSA). Residues 240 to 251 (DNEKIEAADKAK) are compositionally biased toward basic and acidic residues. Ser-255 carries GPI-anchor amidated serine lipidation. Positions 256 to 278 (ASKAGWSFDVILLLAFLASFAGF) are cleaved as a propeptide — removed in mature form.

This sequence belongs to the fasciclin-like AGP family.

Its subcellular location is the cell membrane. May be a cell surface adhesion protein. This Arabidopsis thaliana (Mouse-ear cress) protein is Fasciclin-like arabinogalactan protein 5 (FLA5).